We begin with the raw amino-acid sequence, 187 residues long: Ribosome-recycling factor (187 aa).

It belongs to the RRF family.

The protein resides in the cytoplasm. Functionally, responsible for the release of ribosomes from messenger RNA at the termination of protein biosynthesis. May increase the efficiency of translation by recycling ribosomes from one round of translation to another. The polypeptide is Ribosome-recycling factor (Rhodopseudomonas palustris (strain BisB5)).